Consider the following 305-residue polypeptide: tRNA dimethylallyltransferase (305 aa).

Residue 8–15 (GPTAIGKS) coordinates ATP. 10 to 15 (TAIGKS) provides a ligand contact to substrate. Residues 33–36 (DSMA) form an interaction with substrate tRNA region.

It belongs to the IPP transferase family. As to quaternary structure, monomer. Mg(2+) serves as cofactor.

It carries out the reaction adenosine(37) in tRNA + dimethylallyl diphosphate = N(6)-dimethylallyladenosine(37) in tRNA + diphosphate. Catalyzes the transfer of a dimethylallyl group onto the adenine at position 37 in tRNAs that read codons beginning with uridine, leading to the formation of N6-(dimethylallyl)adenosine (i(6)A). The protein is tRNA dimethylallyltransferase of Aquifex aeolicus (strain VF5).